Reading from the N-terminus, the 333-residue chain is Small ribosomal subunit protein uS2 (333 aa).

The protein belongs to the universal ribosomal protein uS2 family.

The polypeptide is Small ribosomal subunit protein uS2 (Azorhizobium caulinodans (strain ATCC 43989 / DSM 5975 / JCM 20966 / LMG 6465 / NBRC 14845 / NCIMB 13405 / ORS 571)).